A 247-amino-acid polypeptide reads, in one-letter code: 1-(5-phosphoribosyl)-5-[(5-phosphoribosylamino)methylideneamino] imidazole-4-carboxamide isomerase 1 (247 aa).

The Proton acceptor role is filled by glutamate 8. The active-site Proton donor is the aspartate 128.

This sequence belongs to the HisA/HisF family.

The protein resides in the cytoplasm. The catalysed reaction is 1-(5-phospho-beta-D-ribosyl)-5-[(5-phospho-beta-D-ribosylamino)methylideneamino]imidazole-4-carboxamide = 5-[(5-phospho-1-deoxy-D-ribulos-1-ylimino)methylamino]-1-(5-phospho-beta-D-ribosyl)imidazole-4-carboxamide. The protein operates within amino-acid biosynthesis; L-histidine biosynthesis; L-histidine from 5-phospho-alpha-D-ribose 1-diphosphate: step 4/9. The chain is 1-(5-phosphoribosyl)-5-[(5-phosphoribosylamino)methylideneamino] imidazole-4-carboxamide isomerase 1 from Ruegeria sp. (strain TM1040) (Silicibacter sp.).